Here is a 120-residue protein sequence, read N- to C-terminus: NAD(P)H-quinone oxidoreductase subunit 3, chloroplastic (120 aa).

The next 3 helical transmembrane spans lie at 7–27 (YDSF…AFSI), 63–83 (YMFA…YPWA), and 89–109 (LGLF…VGLV).

The protein belongs to the complex I subunit 3 family. As to quaternary structure, NDH is composed of at least 16 different subunits, 5 of which are encoded in the nucleus.

The protein resides in the plastid. It localises to the chloroplast thylakoid membrane. It carries out the reaction a plastoquinone + NADH + (n+1) H(+)(in) = a plastoquinol + NAD(+) + n H(+)(out). The enzyme catalyses a plastoquinone + NADPH + (n+1) H(+)(in) = a plastoquinol + NADP(+) + n H(+)(out). Functionally, NDH shuttles electrons from NAD(P)H:plastoquinone, via FMN and iron-sulfur (Fe-S) centers, to quinones in the photosynthetic chain and possibly in a chloroplast respiratory chain. The immediate electron acceptor for the enzyme in this species is believed to be plastoquinone. Couples the redox reaction to proton translocation, and thus conserves the redox energy in a proton gradient. In Adiantum capillus-veneris (Maidenhair fern), this protein is NAD(P)H-quinone oxidoreductase subunit 3, chloroplastic.